Reading from the N-terminus, the 117-residue chain is Glycine cleavage system H-like protein (117 aa).

Residues 21–103 form the Lipoyl-binding domain; that stretch reads IVKLGLSSQM…ESEGWFVVLQ (83 aa). Lysine 62 is modified (N6-lipoyllysine).

It belongs to the GcvH family. (R)-lipoate serves as cofactor.

This chain is Glycine cleavage system H-like protein, found in Chlamydia trachomatis serovar L2 (strain ATCC VR-902B / DSM 19102 / 434/Bu).